Reading from the N-terminus, the 191-residue chain is Programmed cell death protein 6 (191 aa).

Ala-2 is modified (N-acetylalanine). 5 consecutive EF-hand domains span residues 23-58 (PDQS…GTWT), 59-89 (PFNP…TGVW), 90-125 (KYIT…FGYR), 126-161 (LSDQ…LQRL), and 162-191 (TDIF…FSIV). Positions 36, 38, 40, 42, and 47 each coordinate Ca(2+). Residues Asp-103, Asp-105, Ser-107, Met-109, and Glu-114 each coordinate Ca(2+). Mg(2+) contacts are provided by Asp-169, Asp-171, Asp-173, and Trp-175.

As to quaternary structure, homodimer and heterodimer; heterodimerizes (via the EF-hand 5) with PEF1. Isoform 1 and isoform 2 self-associate; probably forming homodimers. Interacts with CPNE4 (via VWFA domain). Interacts with PDCD6IP; the interaction is calcium-dependent. Interacts with RBM22. Interacts with PLSCR4. Interacts with ANXA7 and TSG101. Interacts with DAPK1. Interacts with SEC31A; the interaction is calcium-dependent and promotes monoubiquitination of SEC31A. Interacts with ANXA11 (via N-terminus); the interaction is calcium-dependent. Interacts with PLSCR3 (via N-terminus); the interaction is calcium-dependent. Interacts with MCOLN1; the interaction is calcium-dependent. Interacts with KDR; the interaction is calcium-dependent. Interacts with HEBP2; the interaction is calcium-dependent. Interacts with TFG. Isoform 1: Interacts with SHISA5, leading to stabilize it. Isoform 2: Does not interact with SHISA5. Isoform 2: Does not interact with PDCD6IP, TSG101, ANXA7 and ANXA11.

It is found in the endoplasmic reticulum membrane. The protein localises to the cytoplasmic vesicle. The protein resides in the COPII-coated vesicle membrane. It localises to the cytoplasm. Its subcellular location is the nucleus. It is found in the endosome. In terms of biological role, calcium sensor that plays a key role in processes such as endoplasmic reticulum (ER)-Golgi vesicular transport, endosomal biogenesis or membrane repair. Acts as an adapter that bridges unrelated proteins or stabilizes weak protein-protein complexes in response to calcium: calcium-binding triggers exposure of apolar surface, promoting interaction with different sets of proteins thanks to 3 different hydrophobic pockets, leading to translocation to membranes. Involved in ER-Golgi transport by promoting the association between PDCD6IP and TSG101, thereby bridging together the ESCRT-III and ESCRT-I complexes. Together with PEF1, acts as a calcium-dependent adapter for the BCR(KLHL12) complex, a complex involved in ER-Golgi transport by regulating the size of COPII coats. In response to cytosolic calcium increase, the heterodimer formed with PEF1 interacts with, and bridges together the BCR(KLHL12) complex and SEC31 (SEC31A or SEC31B), promoting monoubiquitination of SEC31 and subsequent collagen export, which is required for neural crest specification. Involved in the regulation of the distribution and function of MCOLN1 in the endosomal pathway. Promotes localization and polymerization of TFG at endoplasmic reticulum exit site. Required for T-cell receptor-, Fas-, and glucocorticoid-induced apoptosis. May mediate Ca(2+)-regulated signals along the death pathway: interaction with DAPK1 can accelerate apoptotic cell death by increasing caspase-3 activity. Its role in apoptosis may however be indirect, as suggested by knockout experiments. May inhibit KDR/VEGFR2-dependent angiogenesis; the function involves inhibition of VEGF-induced phosphorylation of the Akt signaling pathway. In case of infection by HIV-1 virus, indirectly inhibits HIV-1 production by affecting viral Gag expression and distribution. Has a lower Ca(2+) affinity than isoform 1. This is Programmed cell death protein 6 (PDCD6) from Homo sapiens (Human).